A 558-amino-acid polypeptide reads, in one-letter code: 2-isopropylmalate synthase (558 aa).

The region spanning 31 to 305 is the Pyruvate carboxyltransferase domain; it reads PRWCSTDLRD…YPNLDFSDMR (275 aa). Aspartate 40, histidine 244, histidine 246, and asparagine 280 together coordinate Mg(2+). Residues 439–558 are regulatory domain; that stretch reads NPDDKGQMKL…NACHPLYKEA (120 aa).

The protein belongs to the alpha-IPM synthase/homocitrate synthase family. LeuA type 2 subfamily. In terms of assembly, homodimer. Mg(2+) serves as cofactor.

It localises to the cytoplasm. It catalyses the reaction 3-methyl-2-oxobutanoate + acetyl-CoA + H2O = (2S)-2-isopropylmalate + CoA + H(+). It functions in the pathway amino-acid biosynthesis; L-leucine biosynthesis; L-leucine from 3-methyl-2-oxobutanoate: step 1/4. Functionally, catalyzes the condensation of the acetyl group of acetyl-CoA with 3-methyl-2-oxobutanoate (2-ketoisovalerate) to form 3-carboxy-3-hydroxy-4-methylpentanoate (2-isopropylmalate). In Marinomonas sp. (strain MWYL1), this protein is 2-isopropylmalate synthase.